The sequence spans 950 residues: Protocadherin alpha-3 (950 aa).

Residues 1–29 form the signal peptide; the sequence is MLFSWREDPGAQCLLLSLLLLAASEVGSG. Cadherin domains are found at residues 30 to 133, 134 to 242, 243 to 350, 351 to 455, 456 to 565, and 581 to 678; these read QLHY…APVF, PMAV…APAF, ERTI…VPEL, VIQS…APAF, SQSE…APAL, and VPRS…APKA. Topologically, residues 30–697 are extracellular; the sequence is QLHYSVSEEA…GPEAALVDVN (668 aa). Asn257 and Asn265 each carry an N-linked (GlcNAc...) asparagine glycan. A glycan (N-linked (GlcNAc...) asparagine) is linked at Asn548. Residues 698-718 form a helical membrane-spanning segment; sequence VYLIVAICAVSSLLVLTLLLY. The Cytoplasmic portion of the chain corresponds to 719 to 950; the sequence is TALRCSAPPT…GNSTTDNSDQ (232 aa). 2 PXXP repeats span residues 734 to 737 and 774 to 777; these read PGKP and PSLP. Residues 734–894 are 6 X 4 AA repeats of P-X-X-P; the sequence is PGKPTLVCSS…PDKFIIPGSP (161 aa). 3 disordered regions span residues 777–806, 831–856, and 869–950; these read PPCPISRDREEKQDVDVDLSAKPRQPNPDW, GPGGPDQQWPTVSSATPEPEAGEVSP, and FKYG…NSDQ. Residues 782 to 797 show a composition bias toward basic and acidic residues; sequence SRDREEKQDVDVDLSA. 4 PXXP repeats span residues 799 to 802, 832 to 835, 873 to 876, and 891 to 894; these read PRQP, PGGP, PGNP, and PGSP. The span at 909–923 shows a compositional bias: basic and acidic residues; that stretch reads DKSDFITFGKKEETK.

The protein localises to the cell membrane. In terms of biological role, potential calcium-dependent cell-adhesion protein. May be involved in the establishment and maintenance of specific neuronal connections in the brain. This is Protocadherin alpha-3 (PCDHA3) from Homo sapiens (Human).